A 365-amino-acid chain; its full sequence is Histidinol-phosphate aminotransferase (365 aa).

N6-(pyridoxal phosphate)lysine is present on lysine 223.

This sequence belongs to the class-II pyridoxal-phosphate-dependent aminotransferase family. Histidinol-phosphate aminotransferase subfamily. In terms of assembly, homodimer. Pyridoxal 5'-phosphate serves as cofactor.

It carries out the reaction L-histidinol phosphate + 2-oxoglutarate = 3-(imidazol-4-yl)-2-oxopropyl phosphate + L-glutamate. It participates in amino-acid biosynthesis; L-histidine biosynthesis; L-histidine from 5-phospho-alpha-D-ribose 1-diphosphate: step 7/9. The chain is Histidinol-phosphate aminotransferase from Brucella melitensis biotype 1 (strain ATCC 23456 / CCUG 17765 / NCTC 10094 / 16M).